The following is a 188-amino-acid chain: Peptidyl-tRNA hydrolase (188 aa).

Phe-15 contributes to the tRNA binding site. Residue His-20 is the Proton acceptor of the active site. 3 residues coordinate tRNA: Tyr-64, Asn-66, and Asn-112.

The protein belongs to the PTH family. As to quaternary structure, monomer.

Its subcellular location is the cytoplasm. It carries out the reaction an N-acyl-L-alpha-aminoacyl-tRNA + H2O = an N-acyl-L-amino acid + a tRNA + H(+). Functionally, hydrolyzes ribosome-free peptidyl-tRNAs (with 1 or more amino acids incorporated), which drop off the ribosome during protein synthesis, or as a result of ribosome stalling. In terms of biological role, catalyzes the release of premature peptidyl moieties from peptidyl-tRNA molecules trapped in stalled 50S ribosomal subunits, and thus maintains levels of free tRNAs and 50S ribosomes. The polypeptide is Peptidyl-tRNA hydrolase (Borreliella afzelii (strain PKo) (Borrelia afzelii)).